The following is a 190-amino-acid chain: MINIVLFGKPGAGKGTQAEFLKEKYNLTHLSTGDIFRFNLKNDTELGKQARVFMDNGELVPCEVTTAMLIDEVKKHPDSAGFLFDGYPRTLDQAEALDKFLPTIGSSVTATIALEADDEILVKRLLERGKTSGRADDQDEEKIRVRYQEYNEKTAPLIGYYKDQNKFYAVDGIGTIEQITERLTSVIDNL.

ATP is bound at residue 11–16 (GAGKGT). Positions 31-60 (STGDIFRFNLKNDTELGKQARVFMDNGELV) are NMP. Residues Thr32, Arg37, 58–60 (ELV), 86–89 (GYPR), and Gln93 each bind AMP. The LID stretch occupies residues 127–137 (ERGKTSGRADD). Arg128 is an ATP binding site. AMP-binding residues include Arg134 and Arg146. Position 174 (Gly174) interacts with ATP.

Belongs to the adenylate kinase family. Monomer.

Its subcellular location is the cytoplasm. The catalysed reaction is AMP + ATP = 2 ADP. Its pathway is purine metabolism; AMP biosynthesis via salvage pathway; AMP from ADP: step 1/1. Catalyzes the reversible transfer of the terminal phosphate group between ATP and AMP. Plays an important role in cellular energy homeostasis and in adenine nucleotide metabolism. This chain is Adenylate kinase, found in Flavobacterium johnsoniae (strain ATCC 17061 / DSM 2064 / JCM 8514 / BCRC 14874 / CCUG 350202 / NBRC 14942 / NCIMB 11054 / UW101) (Cytophaga johnsonae).